The chain runs to 35 residues: Mu-theraphotoxin-Hhn1a (35 aa).

3 disulfides stabilise this stretch: C2-C17, C9-C24, and C16-C31.

The protein belongs to the neurotoxin 10 (Hwtx-1) family. 22 (Htx-4) subfamily. As to quaternary structure, monomer. As to expression, expressed by the venom gland.

It is found in the secreted. In terms of biological role, inhibits selectively tetrodotoxin-sensitive voltage-gated sodium channels (Nav). Does not act by binding to receptor site 3 to slow the inactivation kinetics of sodium currents. In Cyriopagopus hainanus (Chinese bird spider), this protein is Mu-theraphotoxin-Hhn1a.